Reading from the N-terminus, the 451-residue chain is Ubiquinone biosynthesis monooxygenase COQ6, mitochondrial (451 aa).

It belongs to the UbiH/COQ6 family. As to quaternary structure, component of a multi-subunit COQ enzyme complex. The cofactor is FAD.

The protein localises to the mitochondrion inner membrane. It carries out the reaction a 4-hydroxy-3-(all-trans-polyprenyl)benzoate + 2 reduced [2Fe-2S]-[ferredoxin] + O2 + 2 H(+) = a 3,4-dihydroxy-5-(all-trans-polyprenyl)benzoate + 2 oxidized [2Fe-2S]-[ferredoxin] + H2O. The catalysed reaction is a 2-methoxy-6-(all-trans-polyprenyl)phenol + 2 reduced [2Fe-2S]-[ferredoxin] + O2 + 2 H(+) = a 2-methoxy-6-(all-trans-polyprenyl)benzene-1,4-diol + 2 oxidized [2Fe-2S]-[ferredoxin] + H2O. The protein operates within cofactor biosynthesis; ubiquinone biosynthesis. Functionally, FAD-dependent monooxygenase required for two non-consecutive steps during ubiquinone biosynthesis. Required for the C5-ring hydroxylation during ubiquinone biosynthesis by catalyzing the hydroxylation of 4-hydroxy-3-(all-trans-polyprenyl)benzoic acid to 3,4-dihydroxy-5-(all-trans-polyprenyl)benzoic acid. Also acts downstream of coq4, for the C1-hydroxylation during ubiquinone biosynthesis by catalyzing the hydroxylation of 2-methoxy-6-(all-trans-polyprenyl)phenol to 2-methoxy-6-(all-trans-polyprenyl)benzene-1,4-diol. The electrons required for the hydroxylation reaction are funneled indirectly to coq-6 from NADPH via a ferredoxin/ferredoxin reductase system. The sequence is that of Ubiquinone biosynthesis monooxygenase COQ6, mitochondrial from Caenorhabditis elegans.